The chain runs to 294 residues: Non-selective voltage-gated ion channel VDAC2 (294 aa).

The residue at position 2 (Ala-2) is an N-acetylalanine. ATP is bound by residues Lys-23 and Lys-31. Residue Lys-31 is modified to N6-acetyllysine; alternate. Lys-31 carries the N6-succinyllysine; alternate modification. Lys-31 is covalently cross-linked (Glycyl lysine isopeptide (Lys-Gly) (interchain with G-Cter in ubiquitin); alternate). A run of 2 beta stranded transmembrane segments spans residues 37-46 (LVKLDVKTKS) and 50-58 (VEFSTSGSS). Lys-64 is covalently cross-linked (Glycyl lysine isopeptide (Lys-Gly) (interchain with G-Cter in ubiquitin)). The beta stranded transmembrane segment at 65–75 (VTGTLETKYKW) threads the bilayer. Tyr-78 carries the phosphotyrosine modification. 3 beta stranded membrane passes run 80 to 87 (LTFTEKWN), 91 to 100 (TLGTEIAIED), and 106 to 115 (LKLTFDTTFS). Thr-118 is modified (phosphothreonine). Lys-120 is modified (N6-acetyllysine; alternate). A Glycyl lysine isopeptide (Lys-Gly) (interchain with G-Cter in ubiquitin); alternate cross-link involves residue Lys-120. Residue Lys-121 forms a Glycyl lysine isopeptide (Lys-Gly) (interchain with G-Cter in ubiquitin) linkage. Beta stranded transmembrane passes span 122-131 (SGKIKSSYKR), 134-141 (INLGCDVD), 148-156 (AIHGSAVFG), and 161-169 (LAGYQMTFD). Lys-172 is covalently cross-linked (Glycyl lysine isopeptide (Lys-Gly) (interchain with G-Cter in ubiquitin)). 6 beta stranded membrane passes run 174 to 186 (KLTR…GYRT), 189 to 196 (FQLHTNVN), 200 to 209 (EFGGSIYQKV), 213 to 222 (LDTSVNLAWT), 229 to 238 (RFGIAAKYQL), and 242 to 249 (ASISAKVN). At Ser-251 the chain carries Phosphoserine. NAD(+)-binding positions include 253–255 (LIG) and 271–275 (SALVD). 2 beta stranded membrane-spanning segments follow: residues 253–262 (LIGVGYTQTL) and 265–274 (GVKLTLSALV). Residue Lys-277 is modified to N6-acetyllysine; alternate. Residue Lys-277 forms a Glycyl lysine isopeptide (Lys-Gly) (interchain with G-Cter in ubiquitin); alternate linkage. A beta stranded transmembrane segment spans residues 284–293 (HKLGLALELE).

Belongs to the eukaryotic mitochondrial porin family. As to quaternary structure, monomer, homodimer and higher order oligomers; formation of higher order structures is necessary for scramblase activity. Interacts with ARMC12 in a TBC1D21-dependent manner. Interacts with KLC3. Interacts with SPATA33. Interacts with PPP3CC in a SPATA33-dependent manner. Ubiquitinated by PRKN during mitophagy, leading to its degradation and enhancement of mitophagy. Deubiquitinated by USP30.

It localises to the mitochondrion outer membrane. The protein resides in the membrane. The enzyme catalyses chloride(in) = chloride(out). It catalyses the reaction K(+)(in) = K(+)(out). It carries out the reaction a 1,2-diacyl-sn-glycero-3-phospho-L-serine(in) = a 1,2-diacyl-sn-glycero-3-phospho-L-serine(out). The catalysed reaction is a 1,2-diacyl-sn-glycero-3-phosphocholine(in) = a 1,2-diacyl-sn-glycero-3-phosphocholine(out). The enzyme catalyses a 1,2-diacyl-sn-glycero-3-phospho-(1D-myo-inositol)(in) = a 1,2-diacyl-sn-glycero-3-phospho-(1D-myo-inositol)(out). Non-selective voltage-gated ion channel that mediates the transport of anions and cations through the mitochondrion outer membrane and plasma membrane. The channel adopts an open conformation at zero mV and a closed conformation at both positive and negative potentials. There are two populations of channels; the main that functions in a lower open-state conductance with lower ion selectivity, that switch, in a voltage-dependent manner, from the open to a low-conducting 'closed' state and the other that has a normal ion selectivity in the typical high conductance, 'open' state. Binds various lipids, including the sphingolipid ceramide, the phospholipid phosphatidylcholine, and the sterols cholesterol and oxysterol. Binding of ceramide promotes the mitochondrial outer membrane permeabilization (MOMP) apoptotic pathway. In terms of biological role, catalyzes the scrambling of phospholipids across the outer mitochondrial membrane; the mechanism is unrelated to channel activity and is capable of translocating both anionic and zwitterionic phospholipids. The chain is Non-selective voltage-gated ion channel VDAC2 from Oryctolagus cuniculus (Rabbit).